We begin with the raw amino-acid sequence, 163 residues long: 2-C-methyl-D-erythritol 2,4-cyclodiphosphate synthase (163 aa).

Residues Asp11 and His13 each coordinate a divalent metal cation. 4-CDP-2-C-methyl-D-erythritol 2-phosphate contacts are provided by residues 11–13 (DIH) and 37–38 (HS). His45 contributes to the a divalent metal cation binding site. 4-CDP-2-C-methyl-D-erythritol 2-phosphate contacts are provided by residues 59–61 (DIG), 64–68 (FSDTD), 103–109 (AQVPKMA), and Arg145.

Belongs to the IspF family. Homotrimer. A divalent metal cation serves as cofactor.

It carries out the reaction 4-CDP-2-C-methyl-D-erythritol 2-phosphate = 2-C-methyl-D-erythritol 2,4-cyclic diphosphate + CMP. The protein operates within isoprenoid biosynthesis; isopentenyl diphosphate biosynthesis via DXP pathway; isopentenyl diphosphate from 1-deoxy-D-xylulose 5-phosphate: step 4/6. Functionally, involved in the biosynthesis of isopentenyl diphosphate (IPP) and dimethylallyl diphosphate (DMAPP), two major building blocks of isoprenoid compounds. Catalyzes the conversion of 4-diphosphocytidyl-2-C-methyl-D-erythritol 2-phosphate (CDP-ME2P) to 2-C-methyl-D-erythritol 2,4-cyclodiphosphate (ME-CPP) with a corresponding release of cytidine 5-monophosphate (CMP). In Nitrosomonas europaea (strain ATCC 19718 / CIP 103999 / KCTC 2705 / NBRC 14298), this protein is 2-C-methyl-D-erythritol 2,4-cyclodiphosphate synthase.